Reading from the N-terminus, the 89-residue chain is Small ribosomal subunit protein uS17 (89 aa).

It belongs to the universal ribosomal protein uS17 family. As to quaternary structure, part of the 30S ribosomal subunit.

In terms of biological role, one of the primary rRNA binding proteins, it binds specifically to the 5'-end of 16S ribosomal RNA. This chain is Small ribosomal subunit protein uS17, found in Novosphingobium aromaticivorans (strain ATCC 700278 / DSM 12444 / CCUG 56034 / CIP 105152 / NBRC 16084 / F199).